We begin with the raw amino-acid sequence, 319 residues long: ATP-dependent 6-phosphofructokinase (319 aa).

An ATP-binding site is contributed by Gly-11. Position 21-25 (21-25 (RAVVR)) interacts with ADP. Residues 72-73 (RC) and 102-105 (GDGS) each bind ATP. Asp-103 contributes to the Mg(2+) binding site. Residue 125 to 127 (TID) coordinates substrate. The Proton acceptor role is filled by Asp-127. An ADP-binding site is contributed by Arg-154. Substrate is bound by residues Arg-162 and 169–171 (MGR). Residues 185 to 187 (GAE), Arg-211, and 213 to 215 (KKH) contribute to the ADP site. Residues Glu-222, Arg-243, and 249–252 (HVQR) contribute to the substrate site.

It belongs to the phosphofructokinase type A (PFKA) family. ATP-dependent PFK group I subfamily. Prokaryotic clade 'B1' sub-subfamily. As to quaternary structure, homotetramer. Requires Mg(2+) as cofactor.

It localises to the cytoplasm. It catalyses the reaction beta-D-fructose 6-phosphate + ATP = beta-D-fructose 1,6-bisphosphate + ADP + H(+). The protein operates within carbohydrate degradation; glycolysis; D-glyceraldehyde 3-phosphate and glycerone phosphate from D-glucose: step 3/4. Its activity is regulated as follows. Allosterically activated by ADP and other diphosphonucleosides, and allosterically inhibited by phosphoenolpyruvate. In terms of biological role, catalyzes the phosphorylation of D-fructose 6-phosphate to fructose 1,6-bisphosphate by ATP, the first committing step of glycolysis. The protein is ATP-dependent 6-phosphofructokinase of Geobacillus sp. (strain WCH70).